The primary structure comprises 352 residues: Ubiquitin thioesterase otulin (352 aa).

A disordered region spans residues 1-48 (MSRGTMPQPEAWPGASCAETPAREAAATARDGGKAAASGQPRPEMQCP). Positions 18–37 (AETPAREAAATARDGGKAAA) are enriched in low complexity. Residues 52-57 (EEDMYR) carry the PIM motif motif. Y56 carries the phosphotyrosine modification. Linear diubiquitin binding stretches follow at residues 95-96 (EW) and 124-126 (RGD). Residues 118–346 (TSIRRVRGDN…DRHYNIPVRV (229 aa)) form the OTU domain. Residue D126 is part of the active site. C129 (nucleophile) is an active-site residue. Linear diubiquitin binding regions lie at residues 255–259 (FFSVL), 283–289 (TGGLEQV), and 336–338 (DDR). The active site involves H339.

Belongs to the peptidase C65 family. Otulin subfamily. As to quaternary structure, interacts (via the PUB domain) with RNF31 (via the PIM motif); the interaction is direct. Interacts with DVL2. In terms of processing, ubiquitinated. Post-translationally, acetylated. Phosphorylated. Phosphorylation at Tyr-56 prevents interaction with RNF31; dephosphorylation promotes interaction with RNF31 and the LUBAC complex.

The protein resides in the cytoplasm. It carries out the reaction Thiol-dependent hydrolysis of ester, thioester, amide, peptide and isopeptide bonds formed by the C-terminal Gly of ubiquitin (a 76-residue protein attached to proteins as an intracellular targeting signal).. Its function is as follows. Deubiquitinase that specifically removes linear ('Met-1'-linked) polyubiquitin chains to substrates and acts as a regulator of angiogenesis and innate immune response. Required during angiogenesis, craniofacial and neuronal development by regulating the canonical Wnt signaling together with the LUBAC complex. Acts as a negative regulator of NF-kappa-B by regulating the activity of the LUBAC complex. OTULIN function is mainly restricted to homeostasis of the LUBAC complex: acts by removing 'Met-1'-linked autoubiquitination of the LUBAC complex, thereby preventing inactivation of the LUBAC complex. Acts as a key negative regulator of inflammation by restricting spontaneous inflammation and maintaining immune homeostasis. In myeloid cell, required to prevent unwarranted secretion of cytokines leading to inflammation and autoimmunity by restricting linear polyubiquitin formation. Plays a role in innate immune response by restricting linear polyubiquitin formation on LUBAC complex in response to NOD2 stimulation, probably to limit NOD2-dependent pro-inflammatory signaling. The chain is Ubiquitin thioesterase otulin from Homo sapiens (Human).